A 208-amino-acid polypeptide reads, in one-letter code: Holliday junction branch migration complex subunit RuvA (208 aa).

Residues 1-64 (MIGRLHGTVA…DDGQALYGFA (64 aa)) are domain I. The domain II stretch occupies residues 65-143 (SRAERDLFRV…GLLPAASGGV (79 aa)). A disordered region spans residues 139–162 (ASGGVPARTGSGEQLDAPAGPQGS). Residues 144–157 (PARTGSGEQLDAPA) are flexible linker. Residues 158–208 (GPQGSREDAVSALVALGYKPAEAGRLVNAVPGANDLPSEELIRRALQAAVR) form a domain III region.

Belongs to the RuvA family. As to quaternary structure, homotetramer. Forms an RuvA(8)-RuvB(12)-Holliday junction (HJ) complex. HJ DNA is sandwiched between 2 RuvA tetramers; dsDNA enters through RuvA and exits via RuvB. An RuvB hexamer assembles on each DNA strand where it exits the tetramer. Each RuvB hexamer is contacted by two RuvA subunits (via domain III) on 2 adjacent RuvB subunits; this complex drives branch migration. In the full resolvosome a probable DNA-RuvA(4)-RuvB(12)-RuvC(2) complex forms which resolves the HJ.

It localises to the cytoplasm. In terms of biological role, the RuvA-RuvB-RuvC complex processes Holliday junction (HJ) DNA during genetic recombination and DNA repair, while the RuvA-RuvB complex plays an important role in the rescue of blocked DNA replication forks via replication fork reversal (RFR). RuvA specifically binds to HJ cruciform DNA, conferring on it an open structure. The RuvB hexamer acts as an ATP-dependent pump, pulling dsDNA into and through the RuvAB complex. HJ branch migration allows RuvC to scan DNA until it finds its consensus sequence, where it cleaves and resolves the cruciform DNA. This Alkalilimnicola ehrlichii (strain ATCC BAA-1101 / DSM 17681 / MLHE-1) protein is Holliday junction branch migration complex subunit RuvA.